The primary structure comprises 184 residues: Class II hydrophobin 6 (184 aa).

An N-terminal signal peptide occupies residues 1–16 (MNFMLLSAALASMAVA). Intrachain disulfides connect Cys-122-Cys-169, Cys-130-Cys-160, Cys-131-Cys-143, and Cys-170-Cys-181.

Belongs to the cerato-ulmin hydrophobin family. As to quaternary structure, homotetramer. Further self-assembles to form highly ordered films at water-air interfaces through intermolecular interactions. In terms of tissue distribution, expressed in the mycellium.

It is found in the secreted. Its function is as follows. Aerial growth, conidiation, and dispersal of filamentous fungi in the environment rely upon a capability of their secreting small amphipathic proteins called hydrophobins (HPBs) with low sequence identity. Class I can self-assemble into an outermost layer of rodlet bundles on aerial cell surfaces, conferring cellular hydrophobicity that supports fungal growth, development and dispersal; whereas Class II form highly ordered films at water-air interfaces through intermolecular interactions but contribute nothing to the rodlet structure. Hcf-6 is a class II hydrophobin that is involved in adhesion and in tomato plants infection. Is secreted to form a coat both around and beneath the fungus. This is Class II hydrophobin 6 from Passalora fulva (Tomato leaf mold).